Consider the following 350-residue polypeptide: Protein Wnt-8b (350 aa).

Residues 1 to 21 (MFLMKPVCVLLVTCVLHRSHA) form the signal peptide. Cys-53 and Cys-64 form a disulfide bridge. The N-linked (GlcNAc...) asparagine glycan is linked to Asn-102. 10 disulfide bridges follow: Cys-103/Cys-111, Cys-113/Cys-131, Cys-179/Cys-193, Cys-181/Cys-188, Cys-255/Cys-293, Cys-271/Cys-286, Cys-290/Cys-332, Cys-308/Cys-323, Cys-310/Cys-320, and Cys-315/Cys-316. A lipid anchor (O-palmitoleoyl serine) is attached at Ser-185. N-linked (GlcNAc...) asparagine glycosylation is present at Asn-258.

This sequence belongs to the Wnt family. Post-translationally, palmitoleoylation is required for efficient binding to frizzled receptors. Depalmitoleoylation leads to Wnt signaling pathway inhibition. In terms of processing, proteolytic processing by TIKI1 and TIKI2 promotes oxidation and formation of large disulfide-bond oligomers, leading to inactivation of WNT8B.

Its subcellular location is the secreted. The protein localises to the extracellular space. The protein resides in the extracellular matrix. Ligand for members of the frizzled family of seven transmembrane receptors. May play an important role in the development and differentiation of certain forebrain structures, notably the hippocampus. In Mus musculus (Mouse), this protein is Protein Wnt-8b (Wnt8b).